The following is a 211-amino-acid chain: NADH-quinone oxidoreductase subunit I (211 aa).

The interval Pro21–His41 is disordered. 2 consecutive 4Fe-4S ferredoxin-type domains span residues Leu43–Ala73 and Arg89–Asp118. Residues Cys53, Cys56, Cys59, Cys63, Cys98, Cys101, Cys104, and Cys108 each contribute to the [4Fe-4S] cluster site. The tract at residues Arg141–Arg211 is disordered. Residues Arg152–Asp166 are compositionally biased toward basic and acidic residues. Positions Asp179–Gly191 are enriched in acidic residues. The span at Glu192 to Arg211 shows a compositional bias: basic and acidic residues.

Belongs to the complex I 23 kDa subunit family. In terms of assembly, NDH-1 is composed of 14 different subunits. Subunits NuoA, H, J, K, L, M, N constitute the membrane sector of the complex. Requires [4Fe-4S] cluster as cofactor.

It is found in the cell membrane. It carries out the reaction a quinone + NADH + 5 H(+)(in) = a quinol + NAD(+) + 4 H(+)(out). Its function is as follows. NDH-1 shuttles electrons from NADH, via FMN and iron-sulfur (Fe-S) centers, to quinones in the respiratory chain. The immediate electron acceptor for the enzyme in this species is believed to be ubiquinone. Couples the redox reaction to proton translocation (for every two electrons transferred, four hydrogen ions are translocated across the cytoplasmic membrane), and thus conserves the redox energy in a proton gradient. In Parafrankia sp. (strain EAN1pec), this protein is NADH-quinone oxidoreductase subunit I.